Reading from the N-terminus, the 117-residue chain is Immunoglobulin kappa variable 1-12 (117 aa).

A signal peptide spans M1–C22. The tract at residues D23 to C45 is framework-1. The Ig-like domain maps to I24 to P117. A disulfide bridge links C45 with C110. The complementarity-determining-1 stretch occupies residues R46–A56. The tract at residues W57–Y71 is framework-2. Residues A72–S78 are complementarity-determining-2. A framework-3 region spans residues G79 to C110. Positions Q111 to P117 are complementarity-determining-3.

Immunoglobulins are composed of two identical heavy chains and two identical light chains; disulfide-linked.

The protein localises to the secreted. The protein resides in the cell membrane. V region of the variable domain of immunoglobulin light chains that participates in the antigen recognition. Immunoglobulins, also known as antibodies, are membrane-bound or secreted glycoproteins produced by B lymphocytes. In the recognition phase of humoral immunity, the membrane-bound immunoglobulins serve as receptors which, upon binding of a specific antigen, trigger the clonal expansion and differentiation of B lymphocytes into immunoglobulins-secreting plasma cells. Secreted immunoglobulins mediate the effector phase of humoral immunity, which results in the elimination of bound antigens. The antigen binding site is formed by the variable domain of one heavy chain, together with that of its associated light chain. Thus, each immunoglobulin has two antigen binding sites with remarkable affinity for a particular antigen. The variable domains are assembled by a process called V-(D)-J rearrangement and can then be subjected to somatic hypermutations which, after exposure to antigen and selection, allow affinity maturation for a particular antigen. This Homo sapiens (Human) protein is Immunoglobulin kappa variable 1-12.